The sequence spans 54 residues: Large ribosomal subunit protein bL32c (54 aa).

The protein belongs to the bacterial ribosomal protein bL32 family.

It localises to the plastid. The protein localises to the chloroplast. The protein is Large ribosomal subunit protein bL32c of Cucumis sativus (Cucumber).